The following is a 251-amino-acid chain: Probable transcriptional regulatory protein MAB_2888c (251 aa).

Residues 1 to 20 (MSGHSKWATTKHQKAVKDAR) form a disordered region.

It belongs to the TACO1 family.

It is found in the cytoplasm. In Mycobacteroides abscessus (strain ATCC 19977 / DSM 44196 / CCUG 20993 / CIP 104536 / JCM 13569 / NCTC 13031 / TMC 1543 / L948) (Mycobacterium abscessus), this protein is Probable transcriptional regulatory protein MAB_2888c.